The sequence spans 960 residues: Gamma-aminobutyric acid type B receptor subunit 1 (960 aa).

The N-terminal stretch at 1–19 (MLLLLLVPLFLRPLGAGGA) is a signal peptide. Topologically, residues 20–590 (QTPNVTSEGC…KTFRFLSQKL (571 aa)) are extracellular. 2 N-linked (GlcNAc...) asparagine glycosylation sites follow: Asn23 and Asn83. Sushi domains lie at 29 to 95 (CQII…PSRC) and 97 to 158 (RICS…HCQV). Disulfide bonds link Cys99-Cys144, Cys130-Cys156, and Cys219-Cys245. 4-aminobutanoate contacts are provided by Ser246, Ser269, His286, and Tyr366. Cys375 and Cys409 form a disulfide bridge. Asn408 and Asn439 each carry an N-linked (GlcNAc...) asparagine glycan. 4-aminobutanoate is bound at residue Glu465. N-linked (GlcNAc...) asparagine glycosylation is found at Asn481, Asn501, and Asn513. A helical membrane pass occupies residues 591–611 (FISVSVLSSLGIVLAVVCLSF). The Cytoplasmic portion of the chain corresponds to 612–630 (NIYNSHVRYIQNSQPNLNN). A helical transmembrane segment spans residues 631-651 (LTAVGCSLALAAVFPLGLDGY). Residues 652-666 (HIGRSQFPFVCQARL) are Extracellular-facing. The helical transmembrane segment at 667-687 (WLLGLGFSLGYGSMFTKIWWV) threads the bilayer. Over 688–709 (HTVFTKKEEKKEWRKTLEPWKL) the chain is Cytoplasmic. The helical transmembrane segment at 710–730 (YATVGLLVGMDILTLAIWQIV) threads the bilayer. Residues 731–767 (DPLHRTIETFAKEEPKEDIDVSILPQLEHCSSKKMNT) are Extracellular-facing. The helical transmembrane segment at 768-788 (WLGIFYGYKGLLLLLGIFLAY) threads the bilayer. Over 789–803 (ETKSVSTEKINDHRA) the chain is Cytoplasmic. The chain crosses the membrane as a helical span at residues 804-824 (VGMAIYNVAVLCLITAPVTMI). Residues 825-832 (LSSQQDAA) are Extracellular-facing. The helical transmembrane segment at 833–853 (FAFASLAIVFSSYITLVVLFV) threads the bilayer. The Cytoplasmic portion of the chain corresponds to 854-960 (PKMRRLITRG…DGSRVHLLYK (107 aa)). 2 disordered regions span residues 866 to 891 (QSEAQDTMKTGSSTNNNEEEKSRLLE) and 908 to 960 (VSEL…LLYK). A compositionally biased stretch (polar residues) spans 867 to 879 (SEAQDTMKTGSST). Residues 868–924 (EAQDTMKTGSSTNNNEEEKSRLLEKENRELEKIIAEKEERVSELRHQLQSRQQIRSR) adopt a coiled-coil conformation. At Thr872 the chain carries Phosphothreonine. The interval 887–915 (SRLLEKENRELEKIIAEKEERVSELRHQL) is interaction with ATF4. Residue Thr929 is modified to Phosphothreonine.

The protein belongs to the G-protein coupled receptor 3 family. GABA-B receptor subfamily. Heterodimer of GABBR1 and GABBR2. Homodimers may form, but are inactive. Interacts (via C-terminus) with ATF4 (via leucine zipper domain). Interacts with JAKMIP1. Interacts with KCTD8, KCTD12, KCTD12B and KCTD16; this interaction determines the pharmacology and kinetics of the receptor response, the KCTD proteins markedly accelerating the GABA-B response, although to different extents. In terms of tissue distribution, expressed in neuronal tissue including cortex, cerebellum and spinal cord. Not detected in non-neuronal tissues including heart, liver, spleen and kidney.

The protein localises to the cell membrane. The protein resides in the postsynaptic cell membrane. It is found in the cell projection. Its subcellular location is the dendrite. In terms of biological role, component of a heterodimeric G-protein coupled receptor for GABA, formed by GABBR1 and GABBR2. Within the heterodimeric GABA receptor, only GABBR1 seems to bind agonists, while GABBR2 mediates coupling to G proteins. Ligand binding causes a conformation change that triggers signaling via guanine nucleotide-binding proteins (G proteins) and modulates the activity of down-stream effectors, such as adenylate cyclase. Signaling inhibits adenylate cyclase, stimulates phospholipase A2, activates potassium channels, inactivates voltage-dependent calcium-channels and modulates inositol phospholipid hydrolysis. Calcium is required for high affinity binding to GABA. Plays a critical role in the fine-tuning of inhibitory synaptic transmission. Pre-synaptic GABA receptor inhibits neurotransmitter release by down-regulating high-voltage activated calcium channels, whereas postsynaptic GABA receptor decreases neuronal excitability by activating a prominent inwardly rectifying potassium (Kir) conductance that underlies the late inhibitory postsynaptic potentials. Not only implicated in synaptic inhibition but also in hippocampal long-term potentiation, slow wave sleep, muscle relaxation and antinociception. The chain is Gamma-aminobutyric acid type B receptor subunit 1 (Gabbr1) from Mus musculus (Mouse).